Here is a 311-residue protein sequence, read N- to C-terminus: Aspartate carbamoyltransferase catalytic subunit (311 aa).

Carbamoyl phosphate is bound by residues R59 and T60. K87 provides a ligand contact to L-aspartate. Residues R109, H139, and Q142 each coordinate carbamoyl phosphate. L-aspartate is bound by residues R172 and R224. Positions 265 and 266 each coordinate carbamoyl phosphate.

The protein belongs to the aspartate/ornithine carbamoyltransferase superfamily. ATCase family. Heterododecamer (2C3:3R2) of six catalytic PyrB chains organized as two trimers (C3), and six regulatory PyrI chains organized as three dimers (R2).

The enzyme catalyses carbamoyl phosphate + L-aspartate = N-carbamoyl-L-aspartate + phosphate + H(+). It participates in pyrimidine metabolism; UMP biosynthesis via de novo pathway; (S)-dihydroorotate from bicarbonate: step 2/3. In terms of biological role, catalyzes the condensation of carbamoyl phosphate and aspartate to form carbamoyl aspartate and inorganic phosphate, the committed step in the de novo pyrimidine nucleotide biosynthesis pathway. The chain is Aspartate carbamoyltransferase catalytic subunit from Streptococcus equi subsp. equi (strain 4047).